The chain runs to 284 residues: S-formylglutathione hydrolase (284 aa).

Alanine 2 is modified (N-acetylalanine). Asparagine 63 and lysine 67 together coordinate substrate. Catalysis depends on charge relay system residues serine 152, aspartate 229, and histidine 262.

The protein belongs to the esterase D family. In terms of assembly, homodimer.

The catalysed reaction is S-formylglutathione + H2O = formate + glutathione + H(+). Its activity is regulated as follows. Activity toward p-nitrophenyl acetate inhibited by N-ethylmaleimide, 10-(fluoroethoxyphosphinyl)-N-(biotinamidopentyl)decanamide (FP-biotin), iodoacetamide, CuCl(2) and ZnSO(4), but not by phenylmethylsulfonyl fluoride, EDTA, Mg(2+), Mn(2+), Ca(2+) or paraoxon, an organo-phosphate inhibitor of serine hydrolases. Functionally, serine hydrolase which catalyzes the hydrolysis of S-formylglutathione to glutathione and formic acid. Also hydrolyzes S-acetylglutathione and a range of carboxyesters in vitro. Involved in the detoxification of formaldehyde. This chain is S-formylglutathione hydrolase (SFGH), found in Arabidopsis thaliana (Mouse-ear cress).